The primary structure comprises 30 residues: Hemocyanin subunit 2 (30 aa).

This sequence belongs to the tyrosinase family. Hemocyanin subfamily. In terms of tissue distribution, hemolymph.

It localises to the secreted. The protein localises to the extracellular space. Its function is as follows. Hemocyanins are copper-containing oxygen carriers occurring freely dissolved in the hemolymph of many mollusks and arthropods. The chain is Hemocyanin subunit 2 from Homarus americanus (American lobster).